Consider the following 328-residue polypeptide: Glyoxylate reductase/hydroxypyruvate reductase (328 aa).

A Phosphoserine modification is found at serine 36. 83–84 is a substrate binding site; it reads VG. Residues 162 to 164, 185 to 188, serine 217, and isoleucine 243 each bind NADP(+); these read GRI and RQPR. Substrate is bound by residues arginine 245, aspartate 269, and 293–296; that span reads HIGS. Histidine 293 serves as the catalytic Proton donor. Residue glycine 295 participates in NADP(+) binding. Residue threonine 298 is modified to Phosphothreonine.

It belongs to the D-isomer specific 2-hydroxyacid dehydrogenase family. Homodimer.

The catalysed reaction is glycolate + NADP(+) = glyoxylate + NADPH + H(+). It carries out the reaction (R)-glycerate + NAD(+) = 3-hydroxypyruvate + NADH + H(+). The enzyme catalyses (R)-glycerate + NADP(+) = 3-hydroxypyruvate + NADPH + H(+). Its function is as follows. Enzyme with hydroxy-pyruvate reductase, glyoxylate reductase and D-glycerate dehydrogenase enzymatic activities. Reduces hydroxypyruvate to D-glycerate, glyoxylate to glycolate oxidizes D-glycerate to hydroxypyruvate. In Mus musculus (Mouse), this protein is Glyoxylate reductase/hydroxypyruvate reductase (Grhpr).